The chain runs to 262 residues: Phosphatidylserine decarboxylase proenzyme (262 aa).

Catalysis depends on charge relay system; for autoendoproteolytic cleavage activity residues Asp-86, His-142, and Ser-226. Catalysis depends on Ser-226, which acts as the Schiff-base intermediate with substrate; via pyruvic acid; for decarboxylase activity. A Pyruvic acid (Ser); by autocatalysis modification is found at Ser-226.

Belongs to the phosphatidylserine decarboxylase family. PSD-B subfamily. Prokaryotic type I sub-subfamily. As to quaternary structure, heterodimer of a large membrane-associated beta subunit and a small pyruvoyl-containing alpha subunit. Requires pyruvate as cofactor. Is synthesized initially as an inactive proenzyme. Formation of the active enzyme involves a self-maturation process in which the active site pyruvoyl group is generated from an internal serine residue via an autocatalytic post-translational modification. Two non-identical subunits are generated from the proenzyme in this reaction, and the pyruvate is formed at the N-terminus of the alpha chain, which is derived from the carboxyl end of the proenzyme. The autoendoproteolytic cleavage occurs by a canonical serine protease mechanism, in which the side chain hydroxyl group of the serine supplies its oxygen atom to form the C-terminus of the beta chain, while the remainder of the serine residue undergoes an oxidative deamination to produce ammonia and the pyruvoyl prosthetic group on the alpha chain. During this reaction, the Ser that is part of the protease active site of the proenzyme becomes the pyruvoyl prosthetic group, which constitutes an essential element of the active site of the mature decarboxylase.

It localises to the cell membrane. It catalyses the reaction a 1,2-diacyl-sn-glycero-3-phospho-L-serine + H(+) = a 1,2-diacyl-sn-glycero-3-phosphoethanolamine + CO2. The protein operates within phospholipid metabolism; phosphatidylethanolamine biosynthesis; phosphatidylethanolamine from CDP-diacylglycerol: step 2/2. Catalyzes the formation of phosphatidylethanolamine (PtdEtn) from phosphatidylserine (PtdSer). The chain is Phosphatidylserine decarboxylase proenzyme from Bacillus cereus (strain ATCC 10987 / NRS 248).